A 150-amino-acid polypeptide reads, in one-letter code: Large ribosomal subunit protein eL19 (150 aa).

Residues 56–89 (KGQSRARARAFQEARKKGRHRGPGSKKGKKTARM) are disordered. Residues 71-89 (KKGRHRGPGSKKGKKTARM) are compositionally biased toward basic residues.

The protein belongs to the eukaryotic ribosomal protein eL19 family. As to quaternary structure, part of the 50S ribosomal subunit.

Its function is as follows. Binds to the 23S rRNA. The chain is Large ribosomal subunit protein eL19 from Thermococcus kodakarensis (strain ATCC BAA-918 / JCM 12380 / KOD1) (Pyrococcus kodakaraensis (strain KOD1)).